The primary structure comprises 379 residues: Nitric oxide reductase FlRd-NAD(+) reductase (379 aa).

It belongs to the FAD-dependent oxidoreductase family. It depends on FAD as a cofactor.

The protein resides in the cytoplasm. It catalyses the reaction 2 reduced [nitric oxide reductase rubredoxin domain] + NAD(+) + H(+) = 2 oxidized [nitric oxide reductase rubredoxin domain] + NADH. It functions in the pathway nitrogen metabolism; nitric oxide reduction. Functionally, one of at least two accessory proteins for anaerobic nitric oxide (NO) reductase. Reduces the rubredoxin moiety of NO reductase. The protein is Nitric oxide reductase FlRd-NAD(+) reductase of Pectobacterium atrosepticum (strain SCRI 1043 / ATCC BAA-672) (Erwinia carotovora subsp. atroseptica).